The following is a 300-amino-acid chain: Merozoite surface protein 2 (300 aa).

An N-terminal signal peptide occupies residues M1–I20. N22 and N36 each carry an N-linked (GlcNAc...) asparagine glycan. Residues E44 to S226 are polymorphic region. One copy of the 1; inverted repeat lies at G51–A58. Residues G51–A110 are 7 X 8 AA tandem repeats of G-S-G-A-G-A-V-A. 5 repeat units span residues G61–A68, G69–A76, G77–A84, G85–A92, and G93–A100. The stretch at G103–A110 is one 7; inverted repeat. The interval G111–N261 is disordered. Residues S123–E148 are compositionally biased toward low complexity. Over residues N149–V165 the composition is skewed to basic and acidic residues. Polar residues-rich tracts occupy residues K167 to R193 and K200 to P228. N177 carries an N-linked (GlcNAc...) asparagine glycan. The N-linked (GlcNAc...) asparagine glycan is linked to N249. A disulfide bond links C257 and C265. N-linked (GlcNAc...) asparagine glycans are attached at residues N273 and N274. N274 carries the GPI-anchor amidated asparagine lipid modification. The propeptide at S275–I300 is removed in mature form.

The protein localises to the cell membrane. In terms of biological role, may play a role in the merozoite attachment to the erythrocyte. This is Merozoite surface protein 2 from Plasmodium falciparum (isolate imr143).